The chain runs to 500 residues: MAPSSNHKVVIVGAGPVGSLAALYAAARGDEVEVYELRGDLRDPSTIPLNFTKSINLALSERGINAMKHTRRDNMIQKILGEAIPVYGRMIHGRNDEKLWEASQAYDVHGRHINAADRCHLNNALLDELEQTPNVKLFFNHKLTGADFRAKKAWFEQRTPADNTSRAPEVEITFDYLVGADGAHSISRYHMMKYARVDYQQQYIDALWCEFHIPPTEEGEFRISPNHLHIWPGKEFMFIALPSADKSFTCTLFASTSYYTLLESSPESLLESFDKNFPGVCPDLITPADLQTQFETNPHLPLISIKCSPYHFGSSAVIVGDAAHAVVPFYGQGLNAGLEDIRVLFECLDQHGVYDLNASPESRALSRQAALQAYTDQRTKDAHAINDLSKDNYIEMRWGVQLPLYKLRKSLEETLDRYMPSLGWQTQYVRVSFSTQPYSEVIKAVERQGTLLLYGSISAIISSAAIVGVLAWNYPMRVSLLSMLQSPIQQLWSVWRNYHC.

Residues V17 and E36–R38 contribute to the FAD site. N50 carries N-linked (GlcNAc...) asparagine glycosylation. Residue A58 coordinates FAD. R89 and Y106 together coordinate L-kynurenine. 2 residues coordinate FAD: R118 and L143. Residue N163 is glycosylated (N-linked (GlcNAc...) asparagine). FAD-binding positions include D321 and Q332–N335. 2 residues coordinate L-kynurenine: N392 and Y428. The chain crosses the membrane as a helical span at residues L451–A471.

The protein belongs to the aromatic-ring hydroxylase family. KMO subfamily. FAD serves as cofactor.

It localises to the mitochondrion outer membrane. The catalysed reaction is L-kynurenine + NADPH + O2 + H(+) = 3-hydroxy-L-kynurenine + NADP(+) + H2O. Its pathway is secondary metabolite biosynthesis. The protein operates within cofactor biosynthesis; NAD(+) biosynthesis; quinolinate from L-kynurenine: step 1/3. Indoleamine 2,3-dioxygenase; part of the gene cluster that mediates the biosynthesis of aspcandine, a pyrrolobenzazepine alkaloid. Initially, the indoleamine 2,3-dioxygenase acdA accepts L-tryptophan and performs the oxidative opening of the indole ring to yield N'-formyl-L-kynurenine, which undergoes the spontaneous deformylation reaction to provide L-kynurenine. The kynurenine 3-monooxygenase acdD then hydroxylates L-kynurenine to afford 3-hydroxy-L-kynurenine. 3-hydroxy-L-kynurenine is activated by the A domain of the NRPS-PKS acdB and subsequently loaded onto the enzyme. The KS domain conducts the decarboxylative condensation of the 3-hydroxy-L-kynurenyl and malonyl moieties, and subsequent nucleophilic attacks by the two amino groups would occur nonenzymatically at two distinct positions, achieving the chain release and the construction of the tricyclic system. Finally, the dehydration reaction completes the biosynthesis to yield aspcandine. The protein is Kynurenine 3-monooxygenase acdD of Aspergillus candidus.